The following is a 153-amino-acid chain: Calmodulin-like protein 4 (153 aa).

EF-hand domains lie at 8–43 (DQIN…LGAS), 44–79 (PTPG…QIKQ), 81–116 (DPKK…LGEK), and 117–152 (LTHK…PVRD).

This sequence belongs to the calmodulin family. In terms of assembly, interacts with MYO7B; the interaction mediates the association of CALML4 with the IMAC/intermicrovillar adhesion complex. Interacts with MYO7A.

Its subcellular location is the cell projection. It localises to the microvillus. Functionally, as part of the intermicrovillar adhesion complex/IMAC plays a role in epithelial brush border differentiation, controlling microvilli organization and length. Acts as a light chain for MYO7B and is required for efficient targeting of the IMAC to the tips of border brush microvilli. This Bos taurus (Bovine) protein is Calmodulin-like protein 4 (CALML4).